The primary structure comprises 266 residues: Ribonuclease HII (266 aa).

Positions 19–38 (HPGMIRDKEKPAPTKPGKGV) are disordered. In terms of domain architecture, RNase H type-2 spans 58-246 (WPVAGCDEAG…VVAARQKHQP (189 aa)). A divalent metal cation contacts are provided by aspartate 64, glutamate 65, and aspartate 155.

Belongs to the RNase HII family. Mn(2+) serves as cofactor. It depends on Mg(2+) as a cofactor.

The protein localises to the cytoplasm. It catalyses the reaction Endonucleolytic cleavage to 5'-phosphomonoester.. In terms of biological role, endonuclease that specifically degrades the RNA of RNA-DNA hybrids. The chain is Ribonuclease HII from Rhodopseudomonas palustris (strain BisB18).